The primary structure comprises 137 residues: Putative FERT-1 protein (137 aa).

The chain is Putative FERT-1 protein (FERT-1) from Ascaris suum (Pig roundworm).